Here is an 81-residue protein sequence, read N- to C-terminus: Small ribosomal subunit protein bS16 (81 aa).

It belongs to the bacterial ribosomal protein bS16 family.

This chain is Small ribosomal subunit protein bS16, found in Coprothermobacter proteolyticus (strain ATCC 35245 / DSM 5265 / OCM 4 / BT).